The sequence spans 141 residues: MAKKVANVVKLQIPAGKATPAPPVGPALGQAGINIMGFTKDFNARTADQAGMIIPVVITVYEDRSFDFITKTPPAAVLLKKAAGVESGSGEPNTKKVATVTKDQVKQIAETKMQDLNAADVEAAMRMIEGTARSMGFTVEG.

The protein belongs to the universal ribosomal protein uL11 family. As to quaternary structure, part of the ribosomal stalk of the 50S ribosomal subunit. Interacts with L10 and the large rRNA to form the base of the stalk. L10 forms an elongated spine to which L12 dimers bind in a sequential fashion forming a multimeric L10(L12)X complex. Post-translationally, one or more lysine residues are methylated.

Functionally, forms part of the ribosomal stalk which helps the ribosome interact with GTP-bound translation factors. This is Large ribosomal subunit protein uL11 from Lactiplantibacillus plantarum (strain ATCC BAA-793 / NCIMB 8826 / WCFS1) (Lactobacillus plantarum).